Here is a 148-residue protein sequence, read N- to C-terminus: MKVIFLKDVKGKGKKGEVKNVPDGYANNFLLKQGLAAEATNSSMKTLEAQKRKEEKDAAAELENAKQLKETLEKLTVELKAKSGEGGRLFGSITSKQIVDAMQKSHNIKLDKRKFEMDDAIRALGYTNVTVKLHPQVTATVKVHVSEQ.

This sequence belongs to the bacterial ribosomal protein bL9 family.

Binds to the 23S rRNA. This Bacillus cereus (strain ATCC 10987 / NRS 248) protein is Large ribosomal subunit protein bL9.